The sequence spans 296 residues: Bifunctional protein FolD (296 aa).

NADP(+) contacts are provided by residues 166-168 (GRS), Ser195, and Ile236.

This sequence belongs to the tetrahydrofolate dehydrogenase/cyclohydrolase family. In terms of assembly, homodimer.

It catalyses the reaction (6R)-5,10-methylene-5,6,7,8-tetrahydrofolate + NADP(+) = (6R)-5,10-methenyltetrahydrofolate + NADPH. It carries out the reaction (6R)-5,10-methenyltetrahydrofolate + H2O = (6R)-10-formyltetrahydrofolate + H(+). The protein operates within one-carbon metabolism; tetrahydrofolate interconversion. Its function is as follows. Catalyzes the oxidation of 5,10-methylenetetrahydrofolate to 5,10-methenyltetrahydrofolate and then the hydrolysis of 5,10-methenyltetrahydrofolate to 10-formyltetrahydrofolate. This chain is Bifunctional protein FolD, found in Chlorobium limicola (strain DSM 245 / NBRC 103803 / 6330).